A 131-amino-acid polypeptide reads, in one-letter code: M-zodatoxin-Lt8o (131 aa).

An N-terminal signal peptide occupies residues 1 to 20; sequence MKYFVVALALVAAFACIAES. Residues 21-60 constitute a propeptide that is removed on maturation; that stretch reads KPAESEHELAEVEEENELADLEDAVWLEHLADLSDLEEAR.

The protein belongs to the cationic peptide 06 (cytoinsectotoxin) family. In terms of tissue distribution, expressed by the venom gland.

Its subcellular location is the secreted. In terms of biological role, insecticidal, cytolytic and antimicrobial peptide. Forms voltage-dependent, ion-permeable channels in membranes. At high concentration causes cell membrane lysis. This Lachesana tarabaevi (Spider) protein is M-zodatoxin-Lt8o (cit 1-14).